Reading from the N-terminus, the 215-residue chain is 3-isopropylmalate dehydratase small subunit (215 aa).

Belongs to the LeuD family. LeuD type 1 subfamily. Heterodimer of LeuC and LeuD.

It carries out the reaction (2R,3S)-3-isopropylmalate = (2S)-2-isopropylmalate. It functions in the pathway amino-acid biosynthesis; L-leucine biosynthesis; L-leucine from 3-methyl-2-oxobutanoate: step 2/4. In terms of biological role, catalyzes the isomerization between 2-isopropylmalate and 3-isopropylmalate, via the formation of 2-isopropylmaleate. The polypeptide is 3-isopropylmalate dehydratase small subunit (Xylella fastidiosa (strain M23)).